The chain runs to 938 residues: TFIIH basal transcription factor complex helicase/translocase XPB subunit (938 aa).

A Helicase ATP-binding domain is found at 394–562; sequence FRSGNKAHQG…DLRHLVGPKL (169 aa). 407–414 lines the ATP pocket; that stretch reads LPCGAGKT. Positions 515 to 518 match the DEVH box motif; the sequence is DEVH. One can recognise a Helicase C-terminal domain in the interval 627–781; that stretch reads WCTQALLEFH…SYRVLQSDMV (155 aa).

This sequence belongs to the helicase family. RAD25/XPB subfamily. As to quaternary structure, component of the 7-subunit TFIIH core complex composed of XPB, XPD, SSL1, TFB1, TFB2, TFB4 and TFB5.

It catalyses the reaction Couples ATP hydrolysis with the unwinding of duplex DNA by translocating in the 3'-5' direction.. It carries out the reaction ATP + H2O = ADP + phosphate + H(+). Functionally, ATP-dependent 3'-5' DNA helicase/translocase; binds dsDNA rather than ssDNA, unzipping it in a translocase rather than classical helicase activity. Component of the general transcription factor IIH (TFIIH) core complex, involved in spliced leader RNA (SL RNA) gene transcription by RNA polymerase II. TFIIH has an essential role in transcription initiation. When the pre-initiation complex (PIC) has been established, TFIIH is required for promoter opening and promoter escape. The ATPase activity of XPB is required for promoter opening and promoter escape. The chain is TFIIH basal transcription factor complex helicase/translocase XPB subunit from Trypanosoma brucei brucei (strain 927/4 GUTat10.1).